Here is an 813-residue protein sequence, read N- to C-terminus: Probable receptor-like protein kinase At5g39020 (813 aa).

An N-terminal signal peptide occupies residues 1–21; the sequence is MNCNVLFLLSVLVSVTAGVTA. Topologically, residues 22 to 437 are extracellular; it reads AYHPTDVFLF…TPPIKGKPHV (416 aa). Asn-46, Asn-61, Asn-165, Asn-202, Asn-213, Asn-263, Asn-286, Asn-293, Asn-384, and Asn-401 each carry an N-linked (GlcNAc...) asparagine glycan. The chain crosses the membrane as a helical span at residues 438-458; it reads LVIILIVVGSVIGLATFIVII. Topologically, residues 459-813 are cytoplasmic; sequence MLLIRQMKRK…QTQTLDSTII (355 aa). The 276-residue stretch at 496–771 folds into the Protein kinase domain; that stretch reads KSFSHTVGKG…KVVEMIEGSL (276 aa). Residues 502-510 and Lys-524 contribute to the ATP site; that span reads VGKGGFGTV. Residue Asp-619 is the Proton acceptor of the active site. Positions 791–813 are disordered; that stretch reads ESSSLSDGQEAEKQTQTLDSTII. Positions 804–813 are enriched in polar residues; the sequence is QTQTLDSTII.

Belongs to the protein kinase superfamily. Ser/Thr protein kinase family.

The protein resides in the membrane. This is Probable receptor-like protein kinase At5g39020 from Arabidopsis thaliana (Mouse-ear cress).